We begin with the raw amino-acid sequence, 116 residues long: Large ribosomal subunit protein bL19 (116 aa).

This sequence belongs to the bacterial ribosomal protein bL19 family.

Its function is as follows. This protein is located at the 30S-50S ribosomal subunit interface and may play a role in the structure and function of the aminoacyl-tRNA binding site. This chain is Large ribosomal subunit protein bL19, found in Staphylococcus carnosus (strain TM300).